The following is a 282-amino-acid chain: Exo-glucosaminidase LytG (282 aa).

A signal peptide spans 1–29; that stretch reads MARKKLKKRKLLISLFFLVSIPLALFVLA. Positions 203 to 281 constitute a GW domain; sequence SLKSVDLNAS…DDSAVEIKEA (79 aa).

It belongs to the glycosyl hydrolase 73 family. It depends on Mg(2+) as a cofactor.

The protein localises to the secreted. It is found in the cell wall. Inhibited by EDTA. Functionally, is the major glucosaminidase responsible for peptidoglycan structural determination during vegetative growth. Catalyzes the hydrolysis of 1,4-beta-linkages between N-acetyl-D-glucosamine and N-acetylmuramic acid residues in peptidoglycan. Acts processively from the ends of the glycan strands. Also plays a role in motility, chemotaxis and cell division. The sequence is that of Exo-glucosaminidase LytG (lytG) from Bacillus subtilis (strain 168).